A 154-amino-acid chain; its full sequence is Prefoldin subunit 2 (154 aa).

Disordered stretches follow at residues 1 to 20 and 126 to 154; these read MADS…GKGA and LMGE…VLVS. The segment covering 9-18 has biased composition (gly residues); sequence GKSGGSGAGK. Residues 126-139 show a composition bias toward basic and acidic residues; sequence LMGEDEKPAAKENS. Residues 140–154 show a composition bias toward low complexity; it reads EGAGAKASSAGVLVS.

Belongs to the prefoldin subunit beta family. As to quaternary structure, heterohexamer of two PFD-alpha type and four PFD-beta type subunits. Component of the PAQosome complex which is responsible for the biogenesis of several protein complexes and which consists of R2TP complex members RUVBL1, RUVBL2, RPAP3 and PIH1D1, URI complex members PFDN2, PFDN6, PDRG1, UXT and URI1 as well as ASDURF, POLR2E and DNAAF10/WDR92. Interacts with URI1; the interaction is phosphorylation-dependent and occurs in a growth-dependent manner.

The protein localises to the nucleus. The protein resides in the cytoplasm. Its subcellular location is the mitochondrion. Binds specifically to cytosolic chaperonin (c-CPN) and transfers target proteins to it. Binds to nascent polypeptide chain and promotes folding in an environment in which there are many competing pathways for nonnative proteins. The protein is Prefoldin subunit 2 (Pfdn2) of Mus musculus (Mouse).